A 534-amino-acid polypeptide reads, in one-letter code: Glucans biosynthesis protein D (534 aa).

A signal peptide (tat-type signal) is located at residues 1-30 (MRMQRRHLLKNAAAALAALGLPALPQWALA).

Belongs to the OpgD/OpgG family. Post-translationally, predicted to be exported by the Tat system. The position of the signal peptide cleavage has not been experimentally proven.

It is found in the periplasm. It participates in glycan metabolism; osmoregulated periplasmic glucan (OPG) biosynthesis. Functionally, probably involved in the control of the structural glucose backbone of osmoregulated periplasmic glucans (OPGs). The polypeptide is Glucans biosynthesis protein D (Xanthomonas oryzae pv. oryzae (strain KACC10331 / KXO85)).